The chain runs to 88 residues: MANIKSAIKRARQNVKLRQHNASARSMYRTYIKNVLKAVESGDQEAARAAYTKAQPVIDKAANKGLIHKNKAARIKGRLVARLKAMAA.

This sequence belongs to the bacterial ribosomal protein bS20 family.

In terms of biological role, binds directly to 16S ribosomal RNA. This chain is Small ribosomal subunit protein bS20, found in Legionella pneumophila (strain Paris).